A 99-amino-acid chain; its full sequence is uncharacterized protein (99 aa).

Residues 10 to 29 (ELSVHTGTVTHTIFVYVFLG) traverse the membrane as a helical segment.

It is found in the membrane. This is an uncharacterized protein from Schizosaccharomyces pombe (strain 972 / ATCC 24843) (Fission yeast).